We begin with the raw amino-acid sequence, 416 residues long: MKSLLLFLKSQVFGLTVETLNGERNGDFEQQKENHGAKNVAPQGIPYQSSYYGQKEQAKRVIDGSLASNYMEGDCCHTEKQMHPWWQLDMKSKMRVHSVAITNRGDCCRERINGAEIRIGNSKKEGGLNSTRCGVVFKMNYEETLSFNCKELEGRYVTVTIPDRIEYLTLCEVQVFADPLEVDGTEASDSSESVDGTEAPASPESDVELPIASGMNVDLTNKSFMFPKESDINHVKLLPEKAMSLKAFTLCMKVLLNVPENRETILFSYRTMFYDELNLWIERDGRIGLYMSGDGIIFPRMKFKSEWNHLCLTWESKYGRTEFWLNGRRSATKVYHQKNTVRSGGIVLLGQDQDSYGGDFDKTQSFVGQIKDLKMWNKVLPLRSLKSLFKGREIGNGNIFDWSSLSYSMIGNVAEV.

The first 14 residues, 1 to 14 (MKSLLLFLKSQVFG), serve as a signal peptide directing secretion. A glycan (N-linked (GlcNAc...) asparagine) is linked at Asn-129. The tract at residues 184 to 206 (GTEASDSSESVDGTEAPASPESD) is disordered. The region spanning 220-416 (TNKSFMFPKE…YSMIGNVAEV (197 aa)) is the Pentraxin (PTX) domain. The N-linked (GlcNAc...) asparagine glycan is linked to Asn-221. Cys-251 and Cys-311 are oxidised to a cystine. Ca(2+)-binding residues include Asp-275, Gln-353, Asp-354, and Gln-364.

The cofactor is Ca(2+).

The protein is Pentraxin fusion protein (pxn1) of Xenopus laevis (African clawed frog).